Here is a 233-residue protein sequence, read N- to C-terminus: Antiholin-like protein LrgB (233 aa).

7 helical membrane-spanning segments follow: residues 9–29, 34–54, 63–83, 97–117, 121–141, 144–164, and 212–232; these read TPYFGILLSVIPFFLATILFE, FFLFAPLFVSMVFGVAFLYLT, IGGDIIYFFLEPATICFAIPL, IIGGIGIGTVVALLIILTFAK, FANDVILSMLPQAATTAIALP, AGIGGIKELTSLAVILNGVII, and IALVLVGVVVVAVVPVFVAIF.

The protein belongs to the CidB/LrgB family. LrgB subfamily.

The protein localises to the cell membrane. Its function is as follows. Inhibits the expression or activity of extracellular murein hydrolases by interacting, possibly with LrgA, with the holin-like proteins CidA and/or CidB. The LrgAB and CidAB proteins may affect the proton motive force of the membrane. May be involved in programmed cell death (PCD), possibly triggering PCD in response to antibiotics and environmental stresses. The sequence is that of Antiholin-like protein LrgB from Staphylococcus aureus (strain Mu3 / ATCC 700698).